We begin with the raw amino-acid sequence, 238 residues long: Urease accessory protein UreF (238 aa).

It belongs to the UreF family. In terms of assembly, ureD, UreF and UreG form a complex that acts as a GTP-hydrolysis-dependent molecular chaperone, activating the urease apoprotein by helping to assemble the nickel containing metallocenter of UreC. The UreE protein probably delivers the nickel.

It is found in the cytoplasm. Functionally, required for maturation of urease via the functional incorporation of the urease nickel metallocenter. This chain is Urease accessory protein UreF, found in Delftia acidovorans (strain DSM 14801 / SPH-1).